The sequence spans 807 residues: Hyaluronate lyase (807 aa).

The N-terminal stretch at 1–40 (MTYRIKKWQKLSTITLLMAGVITLNGGEFRSVDKHQIAVA) is a signal peptide. Active-site residues include Asn241, His297, and Tyr306.

This sequence belongs to the polysaccharide lyase 8 family.

It localises to the secreted. It carries out the reaction [hyaluronan](n) = n 3-(4-deoxy-beta-D-gluc-4-enuronosyl)-N-acetyl-D-glucosamine + H2O. This Staphylococcus aureus (strain NCTC 8325 / PS 47) protein is Hyaluronate lyase.